The primary structure comprises 338 residues: Methionine synthase (338 aa).

Zn(2+)-binding residues include H210, C212, E234, and C294.

The protein belongs to the archaeal MetE family. Zn(2+) serves as cofactor.

It participates in amino-acid biosynthesis; L-methionine biosynthesis via de novo pathway. Its function is as follows. Catalyzes the transfer of a methyl group to L-homocysteine resulting in methionine formation. The physiological methyl donor is unknown. The polypeptide is Methionine synthase (Pyrococcus furiosus (strain ATCC 43587 / DSM 3638 / JCM 8422 / Vc1)).